A 268-amino-acid polypeptide reads, in one-letter code: LOB domain-containing protein 13 (268 aa).

Residues 51 to 152 enclose the LOB domain; it reads TPCAACKLLR…SELTTVRTEI (102 aa). Residues 191–268 are disordered; sequence LLPPPPPPPP…SSDNNVHYFD (78 aa). Pro residues-rich tracts occupy residues 192-205 and 212-222; these read LPPPPPPPPTPRPP and PAPPPTPPVSL. A compositionally biased stretch (low complexity) spans 223 to 243; that stretch reads PSPSMVVSSSSSSNSSATNSM. Over residues 250–268 the composition is skewed to polar residues; that stretch reads STAGYSNSLSSDNNVHYFD.

Belongs to the LOB domain-containing protein family. In terms of tissue distribution, expressed in shoots and roots and at low levels in flowers, but not in leaves or inflorescence stems.

The sequence is that of LOB domain-containing protein 13 (LBD13) from Arabidopsis thaliana (Mouse-ear cress).